The sequence spans 196 residues: Imidazoleglycerol-phosphate dehydratase (196 aa).

Belongs to the imidazoleglycerol-phosphate dehydratase family.

The protein localises to the cytoplasm. It catalyses the reaction D-erythro-1-(imidazol-4-yl)glycerol 3-phosphate = 3-(imidazol-4-yl)-2-oxopropyl phosphate + H2O. It participates in amino-acid biosynthesis; L-histidine biosynthesis; L-histidine from 5-phospho-alpha-D-ribose 1-diphosphate: step 6/9. This is Imidazoleglycerol-phosphate dehydratase from Acidiphilium cryptum (strain JF-5).